The primary structure comprises 315 residues: p-hydroxyphenylacetate 3-hydroxylase, reductase component (315 aa).

Belongs to the non-flavoprotein flavin reductase family. In terms of assembly, homodimer. The p-hydroxyphenylacetate 3-hydroxylase (HpaH) is composed of an oxygenase component C2 and a reductase component C1.

It catalyses the reaction a reduced flavin + NAD(+) = an oxidized flavin + NADH + 2 H(+). It participates in aromatic compound metabolism; 4-hydroxyphenylacetate degradation; pyruvate and succinate semialdehyde from 4-hydroxyphenylacetate: step 1/7. Flavin concentrations greater than 15 uM do not inhibit the NADH oxidation activity of the reductase component C1 but do affect the hydroxylation activity of the C1-C2 complex. Maximal reductase activity is achieved only upon HPA binding to the reductase component C1 before interaction with NADH. HPA stimulates the rates of both the reduction of FMN and release of reduced FMN from the reductase component. Functionally, reductase component of a two-component system that supplies reduced FMN (FMNH2) to the oxygenase component to catalyze the hydroxylation of 4-hydroxyphenylacetic acid, leading to the production of 3,4-dihydroxyphenylacetate (3,4-DHPA). Catalyzes the reduction of free flavins (FMN, FAD and riboflavin) by NADH. Subsequently, the reduced flavins diffuse to the oxygenase component C2. This chain is p-hydroxyphenylacetate 3-hydroxylase, reductase component, found in Acinetobacter baumannii.